We begin with the raw amino-acid sequence, 628 residues long: E3 SUMO-protein ligase PIAS3 (628 aa).

Residues methionine 1 to serine 200 are interaction with CCAR2. Residues valine 11–leucine 45 form the SAP domain. An LXXLL motif motif is present at residues leucine 19 to leucine 23. Glycyl lysine isopeptide (Lys-Gly) (interchain with G-Cter in SUMO2) cross-links involve residues lysine 46, lysine 56, lysine 230, and lysine 307. A PINIT domain is found at methionine 115–leucine 280. Residues proline 312 to aspartate 393 form an SP-RING-type zinc finger. Residues cysteine 343, histidine 345, cysteine 366, and cysteine 369 each coordinate Zn(2+). The SUMO1-binding stretch occupies residues leucine 450–aspartate 460. Residues lysine 466 and lysine 482 each participate in a glycyl lysine isopeptide (Lys-Gly) (interchain with G-Cter in SUMO2) cross-link. Residues glycine 571 to aspartate 628 are disordered.

This sequence belongs to the PIAS family. As to quaternary structure, monomer. Interacts with PLAG1 and ZFHX3. Interacts with STAT5A; the interaction occurs on stimulation by PRL. Binds SUMO1 and UBE2I. Interacts with AR, BCL11A, HMGA2, IRF1 and NCOA2. Interacts with MITF; the interaction inhibits the transcriptional activity of MITF. Interacts with STAT3; the interaction occurs on stimulation by IL6, CNTF or OSM and inhibits the DNA binding activity of STAT3. Interacts with GFI1; the interaction relieves the inhibitory effect of PIAS3 on STAT3-mediated transcriptional activity. Interacts with MTA1. Interacts with CCAR2 (via N-terminus). Interacts with TRIM8. Interacts with PRDM1. In terms of processing, sumoylated. In terms of tissue distribution, expressed in kidney, heart, spleen, brain and cerebellum; weak expression, if any, in liver and lung.

It is found in the cytoplasm. Its subcellular location is the nucleus. It localises to the nucleus speckle. It participates in protein modification; protein sumoylation. In terms of biological role, functions as an E3-type small ubiquitin-like modifier (SUMO) ligase, stabilizing the interaction between UBE2I and the substrate, and as a SUMO-tethering factor. Plays a crucial role as a transcriptional coregulation in various cellular pathways, including the STAT pathway and the steroid hormone signaling pathway. Repressor of STAT3 signaling via inhibiting STAT3 DNA-binding and suppressing cell growth. Repressor of MITF transcriptional activity. Enhances the sumoylation of MTA1 and may participate in its paralog-selective sumoylation. Sumoylates CCAR2 which promotes its interaction with SIRT1. Diminishes the sumoylation of ZFHX3 by preventing the colocalization of ZFHX3 with SUMO1 in the nucleus. The sequence is that of E3 SUMO-protein ligase PIAS3 (Pias3) from Mus musculus (Mouse).